Here is a 719-residue protein sequence, read N- to C-terminus: uncharacterized protein (719 aa).

The stretch at 64–100 (IQNLNQRKEEVIRLIAEQDKLTDNLKRKIEQSVKLQE) forms a coiled coil. One can recognise an S1 motif domain in the interval 649–718 (GMELQGTVRN…QKGRVSLSMV (70 aa)).

This is an uncharacterized protein from Bacillus subtilis (strain 168).